The primary structure comprises 339 residues: Heat-inducible transcription repressor HrcA (339 aa).

The protein belongs to the HrcA family.

Negative regulator of class I heat shock genes (grpE-dnaK-dnaJ and groELS operons). Prevents heat-shock induction of these operons. In Leifsonia xyli subsp. xyli (strain CTCB07), this protein is Heat-inducible transcription repressor HrcA.